We begin with the raw amino-acid sequence, 286 residues long: Bifunctional protein FolD (286 aa).

Position 166–168 (166–168 (GAS)) interacts with NADP(+).

Belongs to the tetrahydrofolate dehydrogenase/cyclohydrolase family. In terms of assembly, homodimer.

The enzyme catalyses (6R)-5,10-methylene-5,6,7,8-tetrahydrofolate + NADP(+) = (6R)-5,10-methenyltetrahydrofolate + NADPH. The catalysed reaction is (6R)-5,10-methenyltetrahydrofolate + H2O = (6R)-10-formyltetrahydrofolate + H(+). Its pathway is one-carbon metabolism; tetrahydrofolate interconversion. Functionally, catalyzes the oxidation of 5,10-methylenetetrahydrofolate to 5,10-methenyltetrahydrofolate and then the hydrolysis of 5,10-methenyltetrahydrofolate to 10-formyltetrahydrofolate. The polypeptide is Bifunctional protein FolD (Idiomarina loihiensis (strain ATCC BAA-735 / DSM 15497 / L2-TR)).